A 659-amino-acid chain; its full sequence is Zinc finger protein 304 (659 aa).

A KRAB domain is found at 14 to 88; it reads VTFEDVFVYF…TAESGLFQKA (75 aa). 16 consecutive C2H2-type zinc fingers follow at residues 89–111, 115–139, 251–273, 279–301, 307–329, 335–357, 363–385, 391–413, 419–441, 447–469, 475–497, 503–525, 531–553, 559–581, 587–609, and 615–637; these read HPCE…QGSH, KLCT…QKQH, FRCL…RKIH, HVCK…QKFH, YTCS…QRVH, YDCS…QRIH, YKCN…QRFH, YECS…WRIH, YECI…RRVH, YVCS…QIIH, YECS…QKIH, YECG…QRIH, YECN…QRVH, YVCS…KKVH, YECS…QRVH, and YVCS…QKAH.

Belongs to the krueppel C2H2-type zinc-finger protein family. As to quaternary structure, probably part of a corepressor complex containing ZNF304, TRIM28, SETDB1 and DNMT1; leading to promoter hypermethylation and transcriptional silencing. Probably associates with Polycomb group (PcG) complexes; leading to trimethylation of 'Lys-27' of histone H3 (H3K27me3). Interacts with USP28. Post-translationally, deubiquitinated by USP28; the deubiquitination leads to the stabilization of ZNF304 from proteolytic degradation. In terms of tissue distribution, expressed in undifferentiated embryonic stem cells (ESCs). Expressed strongly in colorectal cancers cells (CRCs). Expressed strongly in ovarian carcinoma (OC) tumor cell lines compared to non-transformed ovarian epithelial cells (at protein level). Expressed in lymphoid tissues, thyroid, adrenal gland, prostate, pancreas and skeletal muscles.

It localises to the nucleus. Functionally, acts as a transcriptional regulator and plays a role in gene silencing. Probably forms a corepressor complex required for activated KRAS-mediated promoter hypermethylation and transcriptional silencing of several tumor suppressor genes (TSGs) or other tumor-related genes in colorectal cancer (CRC) cells. Also required to maintain a transcriptionally repressive state of genes in undifferentiated embryonic stem cells (ESCs) by inducing trimethylation of 'Lys-27' of histone H3 (H3K27me3) in a Polycomb group (PcG) complexes-dependent manner. Associates at promoter regions of TSGs and mediates the recruitment of the corepressor complex containing the scaffolding protein TRIM28, methyltransferase DNMT1 and histone methyltransferase SETDB1 and/or the PcG complexes at those sites. Transcription factor involved in the metastatic cascade process by inducing cell migration and proliferation and gain resistance to anoikis of ovarian carcinoma (OC) cells via integrin-mediated signaling pathways. Associates with the ITGB1 promoter and positively regulates beta-1 integrin transcription expression. Promotes angiogenesis. Promotes tumor growth. The polypeptide is Zinc finger protein 304 (Homo sapiens (Human)).